Consider the following 1059-residue polypeptide: Isoleucine--tRNA ligase (1059 aa).

The short motif at 47 to 57 is the 'HIGH' region element; it reads PYTSGQMHLGT. Residues 606–610 carry the 'KMSKS' region motif; that stretch reads KMSKS. Lys609 is a binding site for ATP.

This sequence belongs to the class-I aminoacyl-tRNA synthetase family. IleS type 2 subfamily. As to quaternary structure, monomer. It depends on Zn(2+) as a cofactor.

The protein localises to the cytoplasm. It catalyses the reaction tRNA(Ile) + L-isoleucine + ATP = L-isoleucyl-tRNA(Ile) + AMP + diphosphate. Functionally, catalyzes the attachment of isoleucine to tRNA(Ile). As IleRS can inadvertently accommodate and process structurally similar amino acids such as valine, to avoid such errors it has two additional distinct tRNA(Ile)-dependent editing activities. One activity is designated as 'pretransfer' editing and involves the hydrolysis of activated Val-AMP. The other activity is designated 'posttransfer' editing and involves deacylation of mischarged Val-tRNA(Ile). This Haloquadratum walsbyi (strain DSM 16790 / HBSQ001) protein is Isoleucine--tRNA ligase.